Consider the following 281-residue polypeptide: MQKIAIITDSSCDLTIDEIKDYNLNILPLKIIYKDREYNDIFDIKPIDVYENLHNEVPTTSLCSPDYINSVLDKLEAEGYTHLIGIFISSSLSGTFNAARLVIEERSSFKYYLFDSKIIGYPLGSIVIKAAEFVKEGKSFEEIIEALSIIREATTGFYTLNTLEYLRRGGRIGKVAGTVGDLLHLKPIISVDEHGAYTTIAKARGRKQSLKKLASIILEHLDEGKCNVAILNGMAEEEANQVLDSISSHPNLLKSQVRAIGAAMGVHAGPGMVGVSIQKEI.

Positions 4–279 (IAIITDSSCD…PGMVGVSIQK (276 aa)) constitute a DegV domain. 2 residues coordinate hexadecanoate: Thr-60 and Ser-93.

In terms of biological role, may bind long-chain fatty acids, such as palmitate, and may play a role in lipid transport or fatty acid metabolism. This chain is DegV domain-containing protein CPE2509, found in Clostridium perfringens (strain 13 / Type A).